The sequence spans 566 residues: Urease subunit beta (566 aa).

The Urease domain maps to 129–566; it reads GGIDTHIHFI…VPMARRYFMF (438 aa). Residues His134, His136, and Lys217 each coordinate Ni(2+). Lys217 is subject to N6-carboxylysine. His219 provides a ligand contact to substrate. His246 and His272 together coordinate Ni(2+). The Proton donor role is filled by His320. Asp360 is a binding site for Ni(2+).

It belongs to the metallo-dependent hydrolases superfamily. Urease alpha subunit family. As to quaternary structure, heterohexamer of 3 UreA (alpha) and 3 UreB (beta) subunits. It depends on Ni cation as a cofactor. Carboxylation allows a single lysine to coordinate two nickel ions.

It is found in the cytoplasm. It catalyses the reaction urea + 2 H2O + H(+) = hydrogencarbonate + 2 NH4(+). It functions in the pathway nitrogen metabolism; urea degradation; CO(2) and NH(3) from urea (urease route): step 1/1. The protein is Urease subunit beta of Aliarcobacter butzleri (strain RM4018) (Arcobacter butzleri).